A 264-amino-acid chain; its full sequence is Anamorsin homolog 2 (264 aa).

Residues 1–142 (MAATAAALAV…KVSWSMGSSF (142 aa)) form an N-terminal SAM-like domain region. The segment at 143 to 174 (PLKKATKGLPKIQIDDDSELIDEDSLLTEDDL) is linker. Residues cysteine 185, cysteine 194, cysteine 197, and cysteine 199 each contribute to the [2Fe-2S] cluster site. The tract at residues 185-199 (CEVGATRKACKNCTC) is fe-S binding site A. Residues cysteine 225, cysteine 228, cysteine 236, and cysteine 239 each coordinate [4Fe-4S] cluster. 2 consecutive short sequence motifs (cx2C motif) follow at residues 225–228 (CGNC) and 236–239 (CGTC). The interval 225–239 (CGNCGLGDAFRCGTC) is fe-S binding site B.

This sequence belongs to the anamorsin family. In terms of assembly, monomer. It depends on [2Fe-2S] cluster as a cofactor. [4Fe-4S] cluster is required as a cofactor.

The protein localises to the cytoplasm. It localises to the mitochondrion intermembrane space. Its function is as follows. Component of the cytosolic iron-sulfur (Fe-S) protein assembly (CIA) machinery. Required for the maturation of extramitochondrial Fe-S proteins. Part of an electron transfer chain functioning in an early step of cytosolic Fe-S biogenesis, facilitating the de novo assembly of a [4Fe-4S] cluster on the cytosolic Fe-S scaffold complex. Electrons are transferred from NADPH via a FAD- and FMN-containing diflavin oxidoreductase. Together with the diflavin oxidoreductase, also required for the assembly of the diferric tyrosyl radical cofactor of ribonucleotide reductase (RNR), probably by providing electrons for reduction during radical cofactor maturation in the catalytic small subunit. The sequence is that of Anamorsin homolog 2 from Oryza sativa subsp. indica (Rice).